A 464-amino-acid polypeptide reads, in one-letter code: Probable mannosyltransferase KTR4 (464 aa).

At 1–11 (MRFLSKRILKP) the chain is on the cytoplasmic side. The helical; Signal-anchor for type II membrane protein transmembrane segment at 12 to 32 (VLSVIILISIAVTVVLYFLTA) threads the bilayer. The segment at 33–130 (NENYLQAVKD…NLVRSGDPLA (98 aa)) is stem region. Topologically, residues 33-464 (NENYLQAVKD…SMSEEELEMY (432 aa)) are lumenal. A catalytic region spans residues 131-464 (GKAKGTILSL…SMSEEELEMY (334 aa)). Residue Glu-352 is the Nucleophile of the active site.

It belongs to the glycosyltransferase 15 family.

It is found in the membrane. Its function is as follows. Possible glycosyltransferase that transfers an alpha-D-mannosyl residue from GDP-mannose into lipid-linked oligosaccharide, forming an alpha-(1-&gt;2)-D-mannosyl-D-mannose linkage. The sequence is that of Probable mannosyltransferase KTR4 (KTR4) from Saccharomyces cerevisiae (strain ATCC 204508 / S288c) (Baker's yeast).